A 257-amino-acid polypeptide reads, in one-letter code: Small ribosomal subunit protein uS4c (257 aa).

S4 RNA-binding domains lie at 110 to 170 (MRLD…QLVN) and 189 to 255 (KTLP…KNYL).

This sequence belongs to the universal ribosomal protein uS4 family. In terms of assembly, part of the 30S ribosomal subunit. Contacts protein S5. The interaction surface between S4 and S5 is involved in control of translational fidelity.

It localises to the plastid. Its subcellular location is the chloroplast. Its function is as follows. One of the primary rRNA binding proteins, it binds directly to 16S rRNA where it nucleates assembly of the body of the 30S subunit. Functionally, with S5 and S12 plays an important role in translational accuracy. The protein is Small ribosomal subunit protein uS4c (rps4) of Chlamydomonas reinhardtii (Chlamydomonas smithii).